The chain runs to 544 residues: MTKFIFVTGGVVSSLGKGITAASLAAVLEARGVNVTMTKMDPYINVDPGTMSPFQHGEVFVTEDGAETDLDLGYYERFLRHSKMSKSNNFTSGRIYQNVLNKERRGEYLGGTVQVIPHITDEIKSKILASGEGYDVAIIEIGGTVGDIESLPFMEAVRQMQVELGRNRAMLMHLTLVPYIASAGETKTKPTQHSVKELRSIGLQPDILICRSDHHISQDNRRKIALFTNVEERAVIMCEDAQSIYQIPRTLHEQDLDDLICERFGLDLPEADLSDWDKVVEAQLNPESTVTVAMVGKYVELPDAYKSINEALLHAGITHKADVKIDYIDAERLEDDDSLLAQLHNADAILVPGGFGERGTMGKIKAITYARENNVPYLGICLGMQLAVIEYARNVLHIDANSSEFDRKTAEPIIGLITEWLDERGELQIRSDDSDLGGTMRLGAQQAELVAGSKLAQIYGANNITERHRHRYEMNNRYIEPLEQAGMTVSGYSAKQHLVESVELADHPWFVAVQFHPEFTSSPRGGHPLFNSFVKAAKNYSEAK.

Positions 1-266 (MTKFIFVTGG…DDLICERFGL (266 aa)) are amidoligase domain. Ser-13 is a binding site for CTP. Residue Ser-13 coordinates UTP. ATP contacts are provided by residues 14 to 19 (SLGKGI) and Asp-71. The Mg(2+) site is built by Asp-71 and Glu-140. CTP-binding positions include 147 to 149 (DIE), 187 to 192 (KTKPTQ), and Lys-223. Residues 187–192 (KTKPTQ) and Lys-223 each bind UTP. The region spanning 291-543 (TVAMVGKYVE…VKAAKNYSEA (253 aa)) is the Glutamine amidotransferase type-1 domain. Gly-354 lines the L-glutamine pocket. Cys-381 acts as the Nucleophile; for glutamine hydrolysis in catalysis. L-glutamine-binding positions include 382 to 385 (LGMQ), Glu-404, and Arg-471. Catalysis depends on residues His-516 and Glu-518.

The protein belongs to the CTP synthase family. As to quaternary structure, homotetramer.

It carries out the reaction UTP + L-glutamine + ATP + H2O = CTP + L-glutamate + ADP + phosphate + 2 H(+). It catalyses the reaction L-glutamine + H2O = L-glutamate + NH4(+). The enzyme catalyses UTP + NH4(+) + ATP = CTP + ADP + phosphate + 2 H(+). Its pathway is pyrimidine metabolism; CTP biosynthesis via de novo pathway; CTP from UDP: step 2/2. Allosterically activated by GTP, when glutamine is the substrate; GTP has no effect on the reaction when ammonia is the substrate. The allosteric effector GTP functions by stabilizing the protein conformation that binds the tetrahedral intermediate(s) formed during glutamine hydrolysis. Inhibited by the product CTP, via allosteric rather than competitive inhibition. Catalyzes the ATP-dependent amination of UTP to CTP with either L-glutamine or ammonia as the source of nitrogen. Regulates intracellular CTP levels through interactions with the four ribonucleotide triphosphates. This chain is CTP synthase, found in Psychrobacter cryohalolentis (strain ATCC BAA-1226 / DSM 17306 / VKM B-2378 / K5).